Here is a 487-residue protein sequence, read N- to C-terminus: Histamine H1 receptor (487 aa).

The Extracellular segment spans residues 1-29 (MSLPNSSCLLEDKMCESNKTTMASPQLMP). N-linked (GlcNAc...) asparagine glycosylation is found at Asn-5 and Asn-18. The chain crosses the membrane as a helical span at residues 30 to 50 (LVVVLSTICLVTVGLNLLVLY). Topologically, residues 51 to 64 (AVRSERKLHTVGNL) are cytoplasmic. A helical transmembrane segment spans residues 65–89 (YIVSLSVADLIVGAVVMPMNILYLL). Topologically, residues 90–97 (MSKWSLGR) are extracellular. A helical transmembrane segment spans residues 98-123 (PLCLFWLSMDYVASTASIFSVFILCI). A disulfide bond links Cys-100 and Cys-180. Histamine is bound by residues Asp-107 and Thr-112. The segment at 107-112 (DYVAST) is important for agonist binding. Over 124 to 144 (DRYRSVQQPLRYLKYRTKTRA) the chain is Cytoplasmic. Thr-140 and Thr-142 each carry phosphothreonine. Residues 145–164 (SATILGAWFLSFLWVIPILG) form a helical membrane-spanning segment. Over 165–188 (WNHFMQQTSVRREDKCETDFYDVT) the chain is Extracellular. The helical transmembrane segment at 189–211 (WFKVMTAIINFYLPTLLMLWFYA) threads the bilayer. Asn-198 contacts histamine. Residues 212–416 (KIYKAVRQHC…MNRERKAAKQ (205 aa)) are Cytoplasmic-facing. Ser-230 bears the Phosphoserine mark. Residues 238-261 (KLRPENPKGDAKKPGKESPWEVLK) are compositionally biased toward basic and acidic residues. The interval 238-292 (KLRPENPKGDAKKPGKESPWEVLKRKPKDAGGGSVLKSPSQTPKEMKSPVVFSQE) is disordered. Thr-279 is subject to Phosphothreonine. A phosphoserine mark is found at Ser-344 and Ser-347. Residues 345-377 (EISEDQMLGDSQSFSRTDSDTTTETASGKGKLR) form a disordered region. Residues 353 to 370 (GDSQSFSRTDSDTTTETA) are compositionally biased toward polar residues. Ser-380, Ser-396, and Ser-398 each carry phosphoserine. The helical transmembrane segment at 417–440 (LGFIMAAFILCWIPYFIFFMVIAF) threads the bilayer. Residues 424-428 (FILCW) are important for agonist binding. A histamine-binding site is contributed by Tyr-431. A disulfide bridge connects residues Cys-441 and Cys-444. Over 441–446 (CKNCCN) the chain is Extracellular. Residues 447-469 (EHLHMFTIWLGYINSTLNPLIYP) form a helical membrane-spanning segment. The Cytoplasmic portion of the chain corresponds to 470–487 (LCNENFKKTFKRILHIRS).

This sequence belongs to the G-protein coupled receptor 1 family. In terms of processing, phosphorylation at sites in the second and third cytoplasmic loops independently contribute to agonist-induced receptor down-regulation.

The protein localises to the cell membrane. G-protein-coupled receptor for histamine, a biogenic amine that functions as an immune modulator and a neurotransmitter. Through the H1 receptor, histamine mediates the contraction of smooth muscles and increases capillary permeability due to contraction of terminal venules. Also mediates neurotransmission in the central nervous system and thereby regulates circadian rhythms, emotional and locomotor activities as well as cognitive functions. This is Histamine H1 receptor from Gorilla gorilla gorilla (Western lowland gorilla).